The chain runs to 631 residues: 1-deoxy-D-xylulose-5-phosphate synthase (631 aa).

Residues H73 and 114-116 (GHS) contribute to the thiamine diphosphate site. D145 lines the Mg(2+) pocket. Thiamine diphosphate is bound by residues 146–147 (GA), N174, Y285, and E366. Residue N174 participates in Mg(2+) binding.

Belongs to the transketolase family. DXPS subfamily. Homodimer. The cofactor is Mg(2+). Requires thiamine diphosphate as cofactor.

It carries out the reaction D-glyceraldehyde 3-phosphate + pyruvate + H(+) = 1-deoxy-D-xylulose 5-phosphate + CO2. It participates in metabolic intermediate biosynthesis; 1-deoxy-D-xylulose 5-phosphate biosynthesis; 1-deoxy-D-xylulose 5-phosphate from D-glyceraldehyde 3-phosphate and pyruvate: step 1/1. In terms of biological role, catalyzes the acyloin condensation reaction between C atoms 2 and 3 of pyruvate and glyceraldehyde 3-phosphate to yield 1-deoxy-D-xylulose-5-phosphate (DXP). The protein is 1-deoxy-D-xylulose-5-phosphate synthase of Desulfitobacterium hafniense (strain DSM 10664 / DCB-2).